Consider the following 60-residue polypeptide: uncharacterized protein (60 aa).

This is an uncharacterized protein from Thermotoga maritima (strain ATCC 43589 / DSM 3109 / JCM 10099 / NBRC 100826 / MSB8).